The sequence spans 384 residues: MYTKKPTIPENVIERAYKGKCTKEDALLLLEGNPFELFELANDLRAIAAGDTVSYVVNRNIYITNKCVGNCGFCAYRTEKGYILSIEEILKKAGDARKAGAVEVCVQGGYTPEADMEFYLEVIESLKAEYPDLCLHALSPMEVNYAAETSGMSVEEALRRLKKSGLDSLTGTSAEILSDRVRKIICPSKISTQQWIDTVTAAHKAGISTNATIMYGHVETLKERLDHVFTIREIQKETGGFTELIPMSFLPYNNPVGEKMLASGKFSSTGLEDLQLIAISRVILHTYVKNIQATWVKLGKKLAQVALQCGANDLGGTLMEDQISTASGGSHGEYVSPAEFEWMIKGAGRVPVQRDTLYRKIESGFPGQEGLFPGYAKAGMGSKE.

Residues Val53–Thr286 enclose the Radical SAM core domain. Residues Cys67, Cys71, and Cys74 each contribute to the [4Fe-4S] cluster site.

Belongs to the radical SAM superfamily. CofH family. In terms of assembly, consists of two subunits, CofG and CofH. It depends on [4Fe-4S] cluster as a cofactor.

The enzyme catalyses 5-amino-6-(D-ribitylamino)uracil + L-tyrosine + S-adenosyl-L-methionine = 5-amino-5-(4-hydroxybenzyl)-6-(D-ribitylimino)-5,6-dihydrouracil + 2-iminoacetate + 5'-deoxyadenosine + L-methionine + H(+). The protein operates within cofactor biosynthesis; coenzyme F0 biosynthesis. Its function is as follows. Catalyzes the radical-mediated synthesis of 5-amino-5-(4-hydroxybenzyl)-6-(D-ribitylimino)-5,6-dihydrouracil from 5-amino-6-(D-ribitylamino)uracil and L-tyrosine. This is 5-amino-6-(D-ribitylamino)uracil--L-tyrosine 4-hydroxyphenyl transferase 2 from Methanosarcina mazei (strain ATCC BAA-159 / DSM 3647 / Goe1 / Go1 / JCM 11833 / OCM 88) (Methanosarcina frisia).